Here is a 433-residue protein sequence, read N- to C-terminus: Glutamate--tRNA ligase 1 (433 aa).

Positions 7-17 (PSPTGLIHLGN) match the 'HIGH' region motif. A 'KMSKS' region motif is present at residues 230–234 (KMSKR). Lys233 serves as a coordination point for ATP.

The protein belongs to the class-I aminoacyl-tRNA synthetase family. Glutamate--tRNA ligase type 1 subfamily. In terms of assembly, monomer.

The protein localises to the cytoplasm. The enzyme catalyses tRNA(Glu) + L-glutamate + ATP = L-glutamyl-tRNA(Glu) + AMP + diphosphate. Catalyzes the attachment of glutamate to tRNA(Glu) in a two-step reaction: glutamate is first activated by ATP to form Glu-AMP and then transferred to the acceptor end of tRNA(Glu). The chain is Glutamate--tRNA ligase 1 from Neorickettsia sennetsu (strain ATCC VR-367 / Miyayama) (Ehrlichia sennetsu).